Reading from the N-terminus, the 398-residue chain is 4-hydroxy-3-methylbut-2-enyl diphosphate reductase (398 aa).

[4Fe-4S] cluster is bound at residue Cys66. His96 contacts (2E)-4-hydroxy-3-methylbut-2-enyl diphosphate. His96 lines the dimethylallyl diphosphate pocket. Residue His96 coordinates isopentenyl diphosphate. Residue Cys157 coordinates [4Fe-4S] cluster. Position 185 (His185) interacts with (2E)-4-hydroxy-3-methylbut-2-enyl diphosphate. His185 contributes to the dimethylallyl diphosphate binding site. Isopentenyl diphosphate is bound at residue His185. Catalysis depends on Glu187, which acts as the Proton donor. Thr250 is a (2E)-4-hydroxy-3-methylbut-2-enyl diphosphate binding site. Cys288 contributes to the [4Fe-4S] cluster binding site. (2E)-4-hydroxy-3-methylbut-2-enyl diphosphate-binding residues include Ser317, Ser318, Asn319, and Ser379. Dimethylallyl diphosphate contacts are provided by Ser317, Ser318, Asn319, and Ser379. The isopentenyl diphosphate site is built by Ser317, Ser318, Asn319, and Ser379.

It belongs to the IspH family. Requires [4Fe-4S] cluster as cofactor.

The enzyme catalyses isopentenyl diphosphate + 2 oxidized [2Fe-2S]-[ferredoxin] + H2O = (2E)-4-hydroxy-3-methylbut-2-enyl diphosphate + 2 reduced [2Fe-2S]-[ferredoxin] + 2 H(+). It catalyses the reaction dimethylallyl diphosphate + 2 oxidized [2Fe-2S]-[ferredoxin] + H2O = (2E)-4-hydroxy-3-methylbut-2-enyl diphosphate + 2 reduced [2Fe-2S]-[ferredoxin] + 2 H(+). Its pathway is isoprenoid biosynthesis; dimethylallyl diphosphate biosynthesis; dimethylallyl diphosphate from (2E)-4-hydroxy-3-methylbutenyl diphosphate: step 1/1. It functions in the pathway isoprenoid biosynthesis; isopentenyl diphosphate biosynthesis via DXP pathway; isopentenyl diphosphate from 1-deoxy-D-xylulose 5-phosphate: step 6/6. Its function is as follows. Catalyzes the conversion of 1-hydroxy-2-methyl-2-(E)-butenyl 4-diphosphate (HMBPP) into a mixture of isopentenyl diphosphate (IPP) and dimethylallyl diphosphate (DMAPP). Acts in the terminal step of the DOXP/MEP pathway for isoprenoid precursor biosynthesis. In Prochlorococcus marinus (strain MIT 9313), this protein is 4-hydroxy-3-methylbut-2-enyl diphosphate reductase.